The primary structure comprises 156 residues: Large ribosomal subunit protein uL15 (156 aa).

A compositionally biased stretch (basic and acidic residues) spans 1 to 11 (MKLNDLRDKPG). Residues 1 to 44 (MKLNDLRDKPGSVKARKRVGRGIGSGTGKTGGRGVKGQKSRSGV) form a disordered region. A compositionally biased stretch (gly residues) spans 21-35 (RGIGSGTGKTGGRGV).

It belongs to the universal ribosomal protein uL15 family. As to quaternary structure, part of the 50S ribosomal subunit.

Its function is as follows. Binds to the 23S rRNA. The polypeptide is Large ribosomal subunit protein uL15 (Brucella abortus (strain S19)).